Consider the following 435-residue polypeptide: N-lysine methyltransferase SMYD2-A (435 aa).

The 235-residue stretch at 7-241 (EGTERFLSPG…PEEEIFNSYI (235 aa)) folds into the SET domain. 17 to 19 (KGR) contributes to the S-adenosyl-L-methionine binding site. Residues C52, C55, C65, C68, C74, C78, H86, and C90 each coordinate Zn(2+). The segment at 52–90 (CECCFTRKEGLSKCGKCKQAYYCNVECQRGDWPMHKLEC) adopts an MYND-type zinc-finger fold. S-adenosyl-L-methionine is bound by residues H137, 206–207 (NH), and 258–260 (YFF).

It belongs to the class V-like SAM-binding methyltransferase superfamily.

It localises to the cytoplasm. The protein resides in the cytosol. Its subcellular location is the nucleus. It catalyses the reaction L-lysyl(4)-[histone H3] + 3 S-adenosyl-L-methionine = N(6),N(6),N(6)-trimethyl-L-lysyl(4)-[histone H3] + 3 S-adenosyl-L-homocysteine + 3 H(+). The catalysed reaction is L-lysyl-[protein] + S-adenosyl-L-methionine = N(6)-methyl-L-lysyl-[protein] + S-adenosyl-L-homocysteine + H(+). In terms of biological role, protein-lysine N-methyltransferase that methylates both histones and non-histone proteins, including p53/TP53 and RB1. Specifically trimethylates histone H3 'Lys-4' (H3K4me3) in vivo. The activity requires interaction with HSP90alpha. Shows even higher methyltransferase activity on p53/TP53. Monomethylates 'Lys-370' of p53/TP53, leading to decreased DNA-binding activity and subsequent transcriptional regulation activity of p53/TP53. Monomethylates RB1 at 'Lys-860'. In Danio rerio (Zebrafish), this protein is N-lysine methyltransferase SMYD2-A (smyd2a).